Reading from the N-terminus, the 615-residue chain is MLNRFIAFFRSVFLIGLVATAFGALPARAANETAPDYALSMHGDVALPADYTHFPYTNPDAPKKGSLTVGVVGTFDSLNPFVLKSMRTTARGLYNDGEFGNMVYQTLMLRSRDEPFTLYSLLAEKVAIDPERKWVEFTLNPKAKWSDGQPVTVDDVLFTYDILTEKGRPPYNSRMSRVAKIEKTGERSVRFTFNEKSDREFPMLIAGSMPVLPKHAINRDTFGNSTLEPPIGSGPYVVASVQPGQRIVYKRNPDYWGKDLPSQRGFNNFDKISIEYYRNETSLFESFKKGILDIFIEGNPIRWEKLYDFPAVEQGKVIKDTFEKGTPADMLGFVFNTRRPIFADRRVRQALGLLFDFEWANSNLFAGQYRRTQSFWEGAQLSSVGRPADARERELLAPFPGAVREDVMNGTWHPPVTDGSGHDRVPAKKAYDLLSQAGFQFKDGMAIDPTGKPFAFEIMTRSPDEEKIALAYQRNLSRLGIAVEIHTVDDAQYQQRLQTFDYDMILGALASSLSPGNEQWLRWGSASRDVQGSFNFAGVADPAVDAMIEALLAARNRADFVSAVRALDRVLISGDYYVPLYHLPYQWVARWDRIEHPQKTPLSGYQLPAWWHTSQ.

The first 29 residues, 1-29 (MLNRFIAFFRSVFLIGLVATAFGALPARA), serve as a signal peptide directing secretion.

It belongs to the bacterial solute-binding protein 5 family.

The protein localises to the periplasm. This Brucella abortus biovar 1 (strain 9-941) protein is Putative binding protein BruAb2_0648.